A 152-amino-acid polypeptide reads, in one-letter code: Large ribosomal subunit protein bL9 (152 aa).

Belongs to the bacterial ribosomal protein bL9 family.

Functionally, binds to the 23S rRNA. This is Large ribosomal subunit protein bL9 from Mycobacterium sp. (strain JLS).